The primary structure comprises 362 residues: Phospho-N-acetylmuramoyl-pentapeptide-transferase (362 aa).

Helical transmembrane passes span 21–41 (YITFRAGGACLTALVVSFLLG), 75–95 (TMGGFLILIALTVSTLLWADL), 100–120 (VWAVLMITIGYGALGFADDFL), 136–156 (LVVQAVLGLGAAVWITQLMPG), 170–190 (LMIPFGPLFPLVAMFVMMGAS), 201–221 (GLAIVPTIIAAGVFTLIAYLV), 225–245 (IFSHYLEINFVPGTGELAVFC), 247–267 (ALIGAGMGFLWFNAPPAAVFM), 290–310 (IVLAITGGLFVVETVSVIVQV), and 339–359 (TVVIRFWIVAMILALLGLATL).

Belongs to the glycosyltransferase 4 family. MraY subfamily. The cofactor is Mg(2+).

The protein localises to the cell inner membrane. The enzyme catalyses UDP-N-acetyl-alpha-D-muramoyl-L-alanyl-gamma-D-glutamyl-meso-2,6-diaminopimeloyl-D-alanyl-D-alanine + di-trans,octa-cis-undecaprenyl phosphate = di-trans,octa-cis-undecaprenyl diphospho-N-acetyl-alpha-D-muramoyl-L-alanyl-D-glutamyl-meso-2,6-diaminopimeloyl-D-alanyl-D-alanine + UMP. It functions in the pathway cell wall biogenesis; peptidoglycan biosynthesis. Catalyzes the initial step of the lipid cycle reactions in the biosynthesis of the cell wall peptidoglycan: transfers peptidoglycan precursor phospho-MurNAc-pentapeptide from UDP-MurNAc-pentapeptide onto the lipid carrier undecaprenyl phosphate, yielding undecaprenyl-pyrophosphoryl-MurNAc-pentapeptide, known as lipid I. This chain is Phospho-N-acetylmuramoyl-pentapeptide-transferase, found in Acidiphilium cryptum (strain JF-5).